Consider the following 752-residue polypeptide: Sialidase 85-1.1 (752 aa).

The signal sequence occupies residues Met-1 to Ala-23. 2 BNR repeats span residues Ile-274–Leu-285 and Tyr-319–Glu-330. The tract at residues Ala-693 to Ala-725 is disordered. A compositionally biased stretch (low complexity) spans Ala-701 to Ala-711.

It belongs to the glycosyl hydrolase 33 family.

The catalysed reaction is Hydrolysis of alpha-(2-&gt;3)-, alpha-(2-&gt;6)-, alpha-(2-&gt;8)- glycosidic linkages of terminal sialic acid residues in oligosaccharides, glycoproteins, glycolipids, colominic acid and synthetic substrates.. Its function is as follows. Developmentally regulated neuraminidase implicated in parasite invasion of cells. May contribute to the pathology during T.cruzi infection by cleaving sialic acid from cells of the immune system. This Trypanosoma cruzi protein is Sialidase 85-1.1 (SA85-1.1).